Here is a 254-residue protein sequence, read N- to C-terminus: Glc operon transcriptional activator (254 aa).

One can recognise an HTH gntR-type domain in the interval 6 to 74; sequence RPICEVVAES…QGRDSRVARL (69 aa). A DNA-binding region (H-T-H motif) is located at residues 34–53; sequence ERRLCEKLGFSRSALREGLT.

Functionally, transcriptional activator of the glcDEFGB operon which is associated with glycolate utilization, and encodes malate synthase G and the genes needed for glycolate oxidase activity. Also negatively regulates the transcription of its own gene. Glycolate acts as an effector, but GlcC can also use acetate as an alternative effector. The protein is Glc operon transcriptional activator (glcC) of Escherichia coli O6:H1 (strain CFT073 / ATCC 700928 / UPEC).